The chain runs to 464 residues: MDAVGYEVFWNETLSQIRSESTEAEFNMWFAHLFFIASFENAIEIAVPSDFFRIQFSQKYQEKLERKFLELSGHPIKLLFAVKKGTPHGNTAPPKHVHTYLEKNSPAEVPSKKSFHPDLNRDYTFENFVSGEETKFSHSAAISVSKNPGTSYNPLLIYGGVGLGKTHLMQAIGHEIYKTTDLNVIYVTAENFGNEFISTLLNKKTQDFKKKYRYTADVLLIDDIHFFENKDGLQEELFYTFNELFEKKKQIIFTCDRPVQELKNLSSRLRSRCSRGLSTDLNMPCFETRCAILIKKIQNYNSTYPHKAIHISDDVVRLVSENISSNIRDLEGALTKIIAFIEVSGSITIDIVPSLLKEFFLSARPKHITVETILHVVADHFNISYSDLKGKKRNKSVVYPRQIAMFLSKELTELSTTELGIEFGGRDHSTVIYGCQKIEGEILTNPSLQANLDLLKSKVQDSIR.

Residues 1–74 (MDAVGYEVFW…ERKFLELSGH (74 aa)) form a domain I, interacts with DnaA modulators region. The domain II stretch occupies residues 74–117 (HPIKLLFAVKKGTPHGNTAPPKHVHTYLEKNSPAEVPSKKSFHP). The segment at 118–341 (DLNRDYTFEN…GALTKIIAFI (224 aa)) is domain III, AAA+ region. ATP is bound by residues glycine 162, glycine 164, lysine 165, and threonine 166. Residues 342-464 (EVSGSITIDI…LKSKVQDSIR (123 aa)) form a domain IV, binds dsDNA region.

Belongs to the DnaA family. In terms of assembly, oligomerizes as a right-handed, spiral filament on DNA at oriC.

It localises to the cytoplasm. In terms of biological role, plays an essential role in the initiation and regulation of chromosomal replication. ATP-DnaA binds to the origin of replication (oriC) to initiate formation of the DNA replication initiation complex once per cell cycle. Binds the DnaA box (a 9 base pair repeat at the origin) and separates the double-stranded (ds)DNA. Forms a right-handed helical filament on oriC DNA; dsDNA binds to the exterior of the filament while single-stranded (ss)DNA is stabiized in the filament's interior. The ATP-DnaA-oriC complex binds and stabilizes one strand of the AT-rich DNA unwinding element (DUE), permitting loading of DNA polymerase. After initiation quickly degrades to an ADP-DnaA complex that is not apt for DNA replication. Binds acidic phospholipids. This chain is Chromosomal replication initiator protein DnaA, found in Treponema pallidum (strain Nichols).